We begin with the raw amino-acid sequence, 1306 residues long: Putative late blight resistance protein homolog R1A-10 (1306 aa).

Coiled-coil stretches lie at residues 407 to 428 and 520 to 542; these read SDSL…ESLQ and PRMK…KLLS. The region spanning 521 to 808 is the NB-ARC domain; the sequence is RMKEEIVGFE…SEAFIKSSEG (288 aa). An ATP-binding site is contributed by 554–561; the sequence is GMPGLGKT. 11 LRR repeats span residues 858 to 881, 921 to 935, 936 to 961, 979 to 1007, 1010 to 1035, 1057 to 1081, 1082 to 1106, 1110 to 1129, 1130 to 1153, 1156 to 1181, and 1216 to 1240; these read AEEN…VYSH, LSSL…ILPN, FKFL…PYLR, LWNL…VWDM, LRHL…NLDD, TPNL…ALNF, PIRL…ISAP, YLKL…TADH, LKNL…KVSN, FPQL…AFPN, and ESVV…NFKL. An HMA domain is found at 1240–1306; sequence LVLIEKWPKF…KLRKCGMPGL (67 aa).

This sequence belongs to the disease resistance NB-LRR family.

The protein resides in the cytoplasm. Its subcellular location is the membrane. In terms of biological role, confers resistance to late blight (Phytophthora infestans) races carrying the avirulence gene Avr1. Resistance proteins guard the plant against pathogens that contain an appropriate avirulence protein via an indirect interaction with this avirulence protein. That triggers a defense system including the hypersensitive response, which restricts the pathogen growth. This chain is Putative late blight resistance protein homolog R1A-10 (R1A-10), found in Solanum demissum (Wild potato).